The chain runs to 503 residues: Glycerol kinase (503 aa).

Thr14 serves as a coordination point for ADP. Residues Thr14, Thr15, and Ser16 each contribute to the ATP site. Sn-glycerol 3-phosphate is bound at residue Thr14. Arg18 contributes to the ADP binding site. Residues Arg84, Glu85, Tyr136, and Asp246 each coordinate sn-glycerol 3-phosphate. Residues Arg84, Glu85, Tyr136, Asp246, and Gln247 each contribute to the glycerol site. ADP is bound by residues Thr268 and Gly311. Positions 268, 311, 315, and 412 each coordinate ATP. ADP-binding residues include Gly412 and Asn416.

The protein belongs to the FGGY kinase family.

The catalysed reaction is glycerol + ATP = sn-glycerol 3-phosphate + ADP + H(+). It participates in polyol metabolism; glycerol degradation via glycerol kinase pathway; sn-glycerol 3-phosphate from glycerol: step 1/1. Inhibited by fructose 1,6-bisphosphate (FBP). In terms of biological role, key enzyme in the regulation of glycerol uptake and metabolism. Catalyzes the phosphorylation of glycerol to yield sn-glycerol 3-phosphate. The sequence is that of Glycerol kinase from Haemophilus influenzae (strain PittEE).